We begin with the raw amino-acid sequence, 166 residues long: MYKSAINIVLFCPEIPNNTGNIVRSCTAFKANLHLIKPYGFFLNDKRMVRAGLNCWDKVQMFEHKSWEHFIETTPPNKAIWLLTKSGTTTPDQINMQTDNREQLYFVFGQETKGLPQTLMEQYSQNQVRIPIWNPVRSINLSNTVACVLYEYAKQNHYFNLDKQCA.

4 residues coordinate S-adenosyl-L-methionine: Leu-83, Gly-109, Ile-130, and Ser-138.

It belongs to the class IV-like SAM-binding methyltransferase superfamily. RNA methyltransferase TrmH family. TrmL subfamily.

It localises to the cytoplasm. It carries out the reaction cytidine(34) in tRNA + S-adenosyl-L-methionine = 2'-O-methylcytidine(34) in tRNA + S-adenosyl-L-homocysteine + H(+). It catalyses the reaction 5-carboxymethylaminomethyluridine(34) in tRNA(Leu) + S-adenosyl-L-methionine = 5-carboxymethylaminomethyl-2'-O-methyluridine(34) in tRNA(Leu) + S-adenosyl-L-homocysteine + H(+). In terms of biological role, could methylate the ribose at the nucleotide 34 wobble position in tRNA. The polypeptide is Putative tRNA (cytidine(34)-2'-O)-methyltransferase (Mycoplasma pneumoniae (strain ATCC 29342 / M129 / Subtype 1) (Mycoplasmoides pneumoniae)).